A 468-amino-acid chain; its full sequence is ATP synthase subunit beta (468 aa).

Position 155–162 (155–162 (GGAGVGKT)) interacts with ATP.

It belongs to the ATPase alpha/beta chains family. As to quaternary structure, F-type ATPases have 2 components, CF(1) - the catalytic core - and CF(0) - the membrane proton channel. CF(1) has five subunits: alpha(3), beta(3), gamma(1), delta(1), epsilon(1). CF(0) has three main subunits: a(1), b(2) and c(9-12). The alpha and beta chains form an alternating ring which encloses part of the gamma chain. CF(1) is attached to CF(0) by a central stalk formed by the gamma and epsilon chains, while a peripheral stalk is formed by the delta and b chains.

The protein resides in the cell membrane. The enzyme catalyses ATP + H2O + 4 H(+)(in) = ADP + phosphate + 5 H(+)(out). Functionally, produces ATP from ADP in the presence of a proton gradient across the membrane. The catalytic sites are hosted primarily by the beta subunits. This is ATP synthase subunit beta from Streptococcus pneumoniae serotype 19F (strain G54).